Consider the following 748-residue polypeptide: E3 ubiquitin-protein ligase SMURF2 (748 aa).

Positions Met-1–Lys-119 constitute a C2 domain. A Glycyl lysine isopeptide (Lys-Gly) (interchain with G-Cter in ubiquitin) cross-link involves residue Lys-119. WW domains follow at residues Asn-157–Arg-190, Pro-251–Val-284, and Gly-297–Leu-330. Positions Arg-414–Glu-748 constitute an HECT domain. Cys-716 serves as the catalytic Glycyl thioester intermediate.

Interacts (via WW domains) with SMAD1. Interacts (via WW domains) with SMAD2 (via PY-motif). Interacts (via WW domains) with SMAD3 (via PY-motif). Interacts with SMAD6. Interacts with SMAD7 (via PY-motif) and TGFBR1; SMAD7 recruits SMURF2 to the TGF-beta receptor and regulates its degradation. Does not interact with SMAD4; SMAD4 lacks a PY-motif. Interacts with AIMP1. Interacts with NDFIP1 and NDFIP2; this interaction activates the E3 ubiquitin-protein ligase. Interacts with TTC3. Auto-ubiquitinated and ubiquitinated in the presence of RNF11 and UBE2D1. Ubiquitinated by the SCF(FBXL15) complex and TTC3, leading to its degradation by the proteasome. 'Lys-48'-linked polyubiquitination mediated by TRAF4 at Lys-119 leads to SMURF2 proteasomal degradation.

The protein localises to the nucleus. The protein resides in the cytoplasm. Its subcellular location is the cell membrane. It localises to the membrane raft. The enzyme catalyses S-ubiquitinyl-[E2 ubiquitin-conjugating enzyme]-L-cysteine + [acceptor protein]-L-lysine = [E2 ubiquitin-conjugating enzyme]-L-cysteine + N(6)-ubiquitinyl-[acceptor protein]-L-lysine.. Its pathway is protein modification; protein ubiquitination. Its activity is regulated as follows. Activated by NDFIP1- and NDFIP2-binding. Functionally, E3 ubiquitin-protein ligase which accepts ubiquitin from an E2 ubiquitin-conjugating enzyme in the form of a thioester and then directly transfers the ubiquitin to targeted substrates. Interacts with SMAD7 to trigger SMAD7-mediated transforming growth factor beta/TGF-beta receptor ubiquitin-dependent degradation, thereby down-regulating TGF-beta signaling. In addition, interaction with SMAD7 activates autocatalytic degradation, which is prevented by interaction with AIMP1. Also forms a stable complex with TGF-beta receptor-mediated phosphorylated SMAD1, SMAD2 and SMAD3, and targets SMAD1 and SMAD2 for ubiquitination and proteasome-mediated degradation. SMAD2 may recruit substrates, such as SNON, for ubiquitin-dependent degradation. Negatively regulates TGFB1-induced epithelial-mesenchymal transition and myofibroblast differentiation. The chain is E3 ubiquitin-protein ligase SMURF2 from Mus musculus (Mouse).